We begin with the raw amino-acid sequence, 738 residues long: Interleukin-12 receptor subunit beta-1 (738 aa).

The first 19 residues, 1–19, serve as a signal peptide directing secretion; the sequence is MDMMGLAGTSKHITFLLLC. Topologically, residues 20–565 are extracellular; sequence QLGASGPGDG…QRFSFEVQIS (546 aa). 5 consecutive Fibronectin type-III domains span residues 47-152, 152-258, 259-359, 360-465, and 469-565; these read GPRN…TPPL, LGHI…PEVL, PQAK…LPAQ, ELTE…GNAS, and TPRH…VQIS. The N-linked (GlcNAc...) asparagine glycan is linked to N50. C53 and C63 are disulfide-bonded. N-linked (GlcNAc...) asparagine glycosylation is found at N73, N86, N130, N144, N169, and N188. Positions 244-248 match the WSXWS motif motif; the sequence is WSDWS. N-linked (GlcNAc...) asparagine glycans are attached at residues N330, N368, N374, N401, N463, and N477. A helical transmembrane segment spans residues 566–591; that stretch reads RLSIIFASLGSFASVLLVGSLGYIGL. Residues 592 to 738 are Cytoplasmic-facing; the sequence is NRAAWHLCPP…PGPPTLGQEA (147 aa). The Box 1 motif motif lies at 598 to 606; the sequence is LCPPLPTPC.

Belongs to the type I cytokine receptor family. Type 2 subfamily. In terms of assembly, dimer or oligomer; disulfide-linked. Interacts with IL12RB2 to form the high affinity IL12 receptor. Heterodimer with IL23R; in presence of IL23. The heterodimer forms the IL23 receptor.

It localises to the membrane. Functionally, functions as an interleukin receptor which binds interleukin-12 with low affinity and is involved in IL12 transduction. Associated with IL12RB2 it forms a functional, high affinity receptor for IL12. Also associates with IL23R to form the interleukin-23 receptor which functions in IL23 signal transduction probably through activation of the Jak-Stat signaling cascade. The chain is Interleukin-12 receptor subunit beta-1 (Il12rb1) from Mus musculus (Mouse).